Consider the following 93-residue polypeptide: Small ribosomal subunit protein uS19 (93 aa).

This sequence belongs to the universal ribosomal protein uS19 family.

In terms of biological role, protein S19 forms a complex with S13 that binds strongly to the 16S ribosomal RNA. This is Small ribosomal subunit protein uS19 from Ruminiclostridium cellulolyticum (strain ATCC 35319 / DSM 5812 / JCM 6584 / H10) (Clostridium cellulolyticum).